A 421-amino-acid polypeptide reads, in one-letter code: Gamma-glutamyl phosphate reductase (421 aa).

This sequence belongs to the gamma-glutamyl phosphate reductase family.

It is found in the cytoplasm. The catalysed reaction is L-glutamate 5-semialdehyde + phosphate + NADP(+) = L-glutamyl 5-phosphate + NADPH + H(+). It participates in amino-acid biosynthesis; L-proline biosynthesis; L-glutamate 5-semialdehyde from L-glutamate: step 2/2. Catalyzes the NADPH-dependent reduction of L-glutamate 5-phosphate into L-glutamate 5-semialdehyde and phosphate. The product spontaneously undergoes cyclization to form 1-pyrroline-5-carboxylate. This is Gamma-glutamyl phosphate reductase from Pseudomonas paraeruginosa (strain DSM 24068 / PA7) (Pseudomonas aeruginosa (strain PA7)).